Consider the following 214-residue polypeptide: Probable nicotinate-nucleotide adenylyltransferase (214 aa).

The protein belongs to the NadD family.

The catalysed reaction is nicotinate beta-D-ribonucleotide + ATP + H(+) = deamido-NAD(+) + diphosphate. It participates in cofactor biosynthesis; NAD(+) biosynthesis; deamido-NAD(+) from nicotinate D-ribonucleotide: step 1/1. Catalyzes the reversible adenylation of nicotinate mononucleotide (NaMN) to nicotinic acid adenine dinucleotide (NaAD). The sequence is that of Probable nicotinate-nucleotide adenylyltransferase from Aeromonas hydrophila subsp. hydrophila (strain ATCC 7966 / DSM 30187 / BCRC 13018 / CCUG 14551 / JCM 1027 / KCTC 2358 / NCIMB 9240 / NCTC 8049).